The following is a 430-amino-acid chain: UDP-N-acetylglucosamine 1-carboxyvinyltransferase 1 (430 aa).

22–23 (KN) is a phosphoenolpyruvate binding site. A UDP-N-acetyl-alpha-D-glucosamine-binding site is contributed by Arg-93. Cys-117 serves as the catalytic Proton donor. Cys-117 carries the 2-(S-cysteinyl)pyruvic acid O-phosphothioketal modification. Residues 122–126 (RPVDL), Asp-305, and Val-327 each bind UDP-N-acetyl-alpha-D-glucosamine.

This sequence belongs to the EPSP synthase family. MurA subfamily.

The protein localises to the cytoplasm. It carries out the reaction phosphoenolpyruvate + UDP-N-acetyl-alpha-D-glucosamine = UDP-N-acetyl-3-O-(1-carboxyvinyl)-alpha-D-glucosamine + phosphate. Its pathway is cell wall biogenesis; peptidoglycan biosynthesis. Its function is as follows. Cell wall formation. Adds enolpyruvyl to UDP-N-acetylglucosamine. In Listeria innocua serovar 6a (strain ATCC BAA-680 / CLIP 11262), this protein is UDP-N-acetylglucosamine 1-carboxyvinyltransferase 1.